The sequence spans 292 residues: MPQHDQLHRYLFENFAVRGELVTVSETLQQILENHDYPQPVKNVLAELLVATSLLTATLKFDGDITVQLQGDGPMNLAVINGNNNQQMRGVARVQGEIPENADLKTLVGNGYVVITITPSEGERYQGVVGLEGDTLAACLEDYFMRSEQLPTRLFIRTGDVDGKPAAGGMLLQVMPAQNAQQDDFDHLATLTETIKTEELLTLPANEVLWRLYHEEEVTVYDPQDVEFKCTCSREHCADALKTLPDEEVDSILAEDGEIDMHCDYCGNHYLFNAMDIAEIRNNASPADPQVH.

2 disulfides stabilise this stretch: Cys230-Cys232 and Cys263-Cys266.

The protein belongs to the HSP33 family. In terms of processing, under oxidizing conditions two disulfide bonds are formed involving the reactive cysteines. Under reducing conditions zinc is bound to the reactive cysteines and the protein is inactive.

It localises to the cytoplasm. Functionally, redox regulated molecular chaperone. Protects both thermally unfolding and oxidatively damaged proteins from irreversible aggregation. Plays an important role in the bacterial defense system toward oxidative stress. The sequence is that of 33 kDa chaperonin from Shigella boydii serotype 4 (strain Sb227).